We begin with the raw amino-acid sequence, 129 residues long: Large ribosomal subunit protein uL14m (129 aa).

This sequence belongs to the universal ribosomal protein uL14 family. In terms of assembly, component of the mitochondrial ribosome large subunit (39S) which comprises a 16S rRNA and about 50 distinct proteins.

Its subcellular location is the mitochondrion. The polypeptide is Large ribosomal subunit protein uL14m (mrpl14) (Dictyostelium discoideum (Social amoeba)).